Consider the following 646-residue polypeptide: Beta-mannosyltransferase 6 (646 aa).

The Cytoplasmic portion of the chain corresponds to 1–25; sequence MGNYKPSIKQYVVTVKAIKSSQFGR. The helical transmembrane segment at 26-46 threads the bilayer; that stretch reads LGICAVVLLFVLGYPFYFISN. Residues 47–646 are Extracellular-facing; that stretch reads NPFDTSIRYQ…LTGGWLPSHN (600 aa). Residues asparagine 62, asparagine 81, asparagine 103, asparagine 117, asparagine 127, asparagine 132, asparagine 146, asparagine 334, and asparagine 393 are each glycosylated (N-linked (GlcNAc...) asparagine).

The protein belongs to the BMT family.

The protein resides in the membrane. Functionally, beta-mannosyltransferase involved in cell wall biosynthesis. Required for beta-1,2-mannose transfer on phospholipomannan. Required for pro-inflammatory response in macrophages through phospholipomannan-induced TNF-alpha production. In Candida albicans (strain SC5314 / ATCC MYA-2876) (Yeast), this protein is Beta-mannosyltransferase 6 (BMT6).